An 818-amino-acid polypeptide reads, in one-letter code: Glycerol-3-phosphate acyltransferase (818 aa).

The HXXXXD motif signature appears at 308–313; the sequence is CHRSHM.

It belongs to the GPAT/DAPAT family.

The protein localises to the cell inner membrane. It carries out the reaction sn-glycerol 3-phosphate + an acyl-CoA = a 1-acyl-sn-glycero-3-phosphate + CoA. It participates in phospholipid metabolism; CDP-diacylglycerol biosynthesis; CDP-diacylglycerol from sn-glycerol 3-phosphate: step 1/3. The sequence is that of Glycerol-3-phosphate acyltransferase from Alteromonas mediterranea (strain DSM 17117 / CIP 110805 / LMG 28347 / Deep ecotype).